The following is a 738-amino-acid chain: 1,4-alpha-glucan branching enzyme GlgB (738 aa).

Aspartate 399 serves as the catalytic Nucleophile. Catalysis depends on glutamate 452, which acts as the Proton donor.

Belongs to the glycosyl hydrolase 13 family. GlgB subfamily. As to quaternary structure, monomer.

The catalysed reaction is Transfers a segment of a (1-&gt;4)-alpha-D-glucan chain to a primary hydroxy group in a similar glucan chain.. It participates in glycan biosynthesis; glycogen biosynthesis. Catalyzes the formation of the alpha-1,6-glucosidic linkages in glycogen by scission of a 1,4-alpha-linked oligosaccharide from growing alpha-1,4-glucan chains and the subsequent attachment of the oligosaccharide to the alpha-1,6 position. This Chlamydia trachomatis serovar D (strain ATCC VR-885 / DSM 19411 / UW-3/Cx) protein is 1,4-alpha-glucan branching enzyme GlgB.